The sequence spans 263 residues: Endonuclease 8 (263 aa).

The active-site Schiff-base intermediate with DNA is the proline 2. Catalysis depends on glutamate 3, which acts as the Proton donor. Lysine 53 functions as the Proton donor; for beta-elimination activity in the catalytic mechanism. DNA is bound by residues glutamine 70, arginine 125, and asparagine 169. The FPG-type zinc-finger motif lies at 229 to 263 (KVFHREGKACERCGGVIERSTLSSRPFYGCPVCQK). Arginine 253 (proton donor; for delta-elimination activity) is an active-site residue.

It belongs to the FPG family. The cofactor is Zn(2+).

The enzyme catalyses 2'-deoxyribonucleotide-(2'-deoxyribose 5'-phosphate)-2'-deoxyribonucleotide-DNA = a 3'-end 2'-deoxyribonucleotide-(2,3-dehydro-2,3-deoxyribose 5'-phosphate)-DNA + a 5'-end 5'-phospho-2'-deoxyribonucleoside-DNA + H(+). Involved in base excision repair of DNA damaged by oxidation or by mutagenic agents. Acts as a DNA glycosylase that recognizes and removes damaged bases. Has a preference for oxidized pyrimidines, such as thymine glycol, 5,6-dihydrouracil and 5,6-dihydrothymine. Has AP (apurinic/apyrimidinic) lyase activity and introduces nicks in the DNA strand. Cleaves the DNA backbone by beta-delta elimination to generate a single-strand break at the site of the removed base with both 3'- and 5'-phosphates. The chain is Endonuclease 8 from Enterobacter sp. (strain 638).